The chain runs to 318 residues: NADH-ubiquinone oxidoreductase chain 1 (318 aa).

The next 8 helical transmembrane spans lie at 3–23 (LINLLAMIVPVLLAVAFLTLL), 69–89 (MLFIIAPTLALTLALTMWTPL), 102–122 (MLFILALSSLAVYTIMWSGWA), 144–164 (VTLAIIILSLLLMNGSFTLLS), 171–191 (YIWLLIPSWPLAMMWFISTLA), 222–242 (LFFLAEYANIIMMNALTIILF), 253–273 (ELYTINFTIKTLLFTAFFLWI), and 294–314 (LPLTLVMCMWHVALPIMLAGI).

The protein belongs to the complex I subunit 1 family. In terms of assembly, core subunit of respiratory chain NADH dehydrogenase (Complex I) which is composed of 45 different subunits.

It is found in the mitochondrion inner membrane. It carries out the reaction a ubiquinone + NADH + 5 H(+)(in) = a ubiquinol + NAD(+) + 4 H(+)(out). In terms of biological role, core subunit of the mitochondrial membrane respiratory chain NADH dehydrogenase (Complex I) which catalyzes electron transfer from NADH through the respiratory chain, using ubiquinone as an electron acceptor. Essential for the catalytic activity and assembly of complex I. This Murina suilla (Brown tube-nosed bat) protein is NADH-ubiquinone oxidoreductase chain 1 (MT-ND1).